The primary structure comprises 290 residues: UPF0761 membrane protein Ent638_4092 (290 aa).

The next 6 helical transmembrane spans lie at 44–64 (LLSL…FPMF), 104–124 (VGAC…DSAL), 140–160 (FAVY…SLAI), 183–203 (IFPL…VPTL), 210–230 (AIVG…GFAL), and 244–264 (VLAV…IVLL).

It belongs to the UPF0761 family.

The protein resides in the cell inner membrane. The protein is UPF0761 membrane protein Ent638_4092 of Enterobacter sp. (strain 638).